A 1031-amino-acid polypeptide reads, in one-letter code: Toll-like receptor 9 (1031 aa).

Residues 1–25 (MGPCHGALQPLSLLVQAAMLAVALA) form the signal peptide. Over 26-817 (QGTLPPFLPC…LCLDESLSWD (792 aa)) the chain is Extracellular. A disulfide bridge links C35 with C45. Residue 47–51 (WLFLK) participates in DNA binding. LRR repeat units lie at residues 62–85 (RDNV…DFAQ), 87–110 (SNLQ…HFPC), 122–147 (VPTL…SLVS), 150–166 (LSRT…LTGL), 167–190 (HALR…ALEV), 198–221 (LGNL…LPPS), 223–242 (EYLL…DLAN), 243–268 (LTAL…CVEC), 283–306 (LSRL…WFRG), 308–332 (GNLT…AFQG), 333–356 (LAQL…HLTL), 363–386 (LLSL…TLQP), 390–413 (LPML…IFKD), 414–438 (FPGL…ATTG), 470–494 (CKNL…MFAQ), 496–519 (SRLQ…QFVP), 520–543 (LTSL…SFTE), 545–567 (PRLE…VGHN), 574–598 (LPTL…LCST), 600–622 (LWAL…LYLR), 627–650 (LRSL…TLGN), 652–675 (PKSL…SLTL), 676–699 (LPNL…SLPS), 701–723 (TQLQ…FFAL), 724–747 (ATRL…WFGF), and 749–772 (AGSL…AFVD). N64 carries an N-linked (GlcNAc...) asparagine glycan. DNA contacts are provided by residues 72-77 (SNRIHH) and 95-109 (KWNC…MHFP). Residues C98 and C110 are joined by a disulfide bond. N-linked (GlcNAc...) asparagine glycosylation is present at N129. DNA is bound by residues Y132, R152, and 179–181 (YYK). C178 and C184 are disulfide-bonded. An N-linked (GlcNAc...) asparagine glycan is attached at N200. A DNA-binding site is contributed by Y208. N-linked (GlcNAc...) asparagine glycans are attached at residues N210 and N242. 2 disulfide bridges follow: C255-C268 and C258-C265. A lipid anchor (S-palmitoyl cysteine) is attached at C258. R262 serves as a coordination point for DNA. The S-palmitoyl cysteine moiety is linked to residue C265. 2 N-linked (GlcNAc...) asparagine glycosylation sites follow: N309 and N340. Residues C470 and C500 are joined by a disulfide bond. N472 and N513 each carry an N-linked (GlcNAc...) asparagine glycan. N-linked (GlcNAc...) asparagine glycosylation occurs at N567. N-linked (GlcNAc...) asparagine glycans are attached at residues N669 and N694. A glycan (N-linked (GlcNAc...) asparagine) is linked at N731. Intrachain disulfides connect C764/C790 and C766/C809. A helical membrane pass occupies residues 818–838 (CFGLSLLVVALGLAMPMLHHL). The Cytoplasmic segment spans residues 839 to 1031 (CGWDLWYCFH…NFCRGPTMAE (193 aa)). One can recognise a TIR domain in the interval 866-1011 (LSYDAFVVFD…SFWAQLGMAL (146 aa)).

The protein belongs to the Toll-like receptor family. As to quaternary structure, monomer and homodimer. Exists as a monomer in the absence of unmethylated cytidine-phosphate-guanosine (CpG) ligand. Proteolytic processing of an insertion loop (Z-loop) is required for homodimerization upon binding to the unmethylated CpG ligand leading to its activation. Interacts with MYD88 via their respective TIR domains. Interacts with BTK. Interacts (via transmembrane domain) with UNC93B1. Interacts with CD300LH; the interaction may promote full activation of TLR9-triggered innate responses. Interacts with CNPY3 and HSP90B1; this interaction is required for proper folding in the endoplasmic reticulum. Interacts with SMPDL3B. Interacts with CD82; this interaction is essential for TLR9-dependent myddosome formation in response to CpG stimulation. Post-translationally, activated by proteolytic cleavage of the flexible loop between repeats LRR14 and LRR15 within the ectodomain. Cleavage requires UNC93B1. Proteolytically processed by first removing the majority of the ectodomain by either asparagine endopeptidase (AEP) or a cathepsin followed by a trimming event that is solely cathepsin mediated and required for optimal receptor signaling. Palmitoylated by ZDHHC3 in the Golgi regulates TLR9 trafficking from the Golgi to endosomes. Depalmitoylation by PPT1 controls the release of TLR9 from UNC93B1 in endosomes. Expressed in airway epithelium, vascular endothelium and inflammatory cells in blood vessels of the lungs (at protein level). Highly expressed in pulmonary intravascular macrophages (PIMs) and to a lesser extent in alveolar macrophages, neutrophiles, type-II alveolar epithelial cells and bronchial epithelial cells of the lungs (at protein level). High constitutive intracellular expression in leukocytes including polymorphonuclear leukocytes (PMNs), CD4 and CD8 T cells (at protein level). Expressed throughout the respiratory tract including larynx, upper, middle and lower trachea, and bronchus in isolated equine respiratory epithelial cells (ERECs) and in fully differentiated ERECs cultured at the air-fluid interface (AFI) (at protein level). Constitutively expressed in peripheral blood mononuclear cells (PBMCs), lymph nodes and spleen. The level of expression in PBMCs is about 2- to 3-fold higher than that in lymph nodes and spleen. Very low expression in liver, heart, lung, kidney, small intestine, colon and stomach. Low expression in the airway tissue epithelium of the larynx, upper trachea, middle tranchea, lower trachea, bronchus and spleen, and more abundant expression in mesenteric lymph node. Not expressed in fully differentiated bronchus epithelial cells cultured at the AFI for four weeks. Expressed in gingival tissue.

It localises to the endoplasmic reticulum membrane. It is found in the endosome. The protein localises to the lysosome. Its subcellular location is the cytoplasmic vesicle. The protein resides in the phagosome. It localises to the cell membrane. It is found in the cytoplasm. The protein localises to the nucleus. In terms of biological role, key component of innate and adaptive immunity. TLRs (Toll-like receptors) control host immune response against pathogens through recognition of molecular patterns specific to microorganisms. TLR9 is a nucleotide-sensing TLR which is activated by unmethylated cytidine-phosphate-guanosine (CpG) dinucleotides. Acts via MYD88 and TRAF6, leading to NF-kappa-B activation, cytokine secretion and the inflammatory response. Upon CpG stimulation, induces B-cell proliferation, activation, survival and antibody production. The polypeptide is Toll-like receptor 9 (Equus caballus (Horse)).